Consider the following 183-residue polypeptide: MDLNISTALRSFTQRYIDLWQQQTGHLPASKELYGVPSPCIVETGEDQVFWQPQAFLPEATLTNIERALEIQLHPDIHDFYTQQYAGDMMADLGNHRFTLLQVWSEDDFIRLQENLIGHLVTQKRLKLSPTLFLATTSSEMTMASLCNVSGNVVLEQFGSDKRTLLASTLSHFLDALRPVLPE.

It belongs to the Syd family.

Its subcellular location is the cell inner membrane. Its function is as follows. Interacts with the SecY protein in vivo. May bind preferentially to an uncomplexed state of SecY, thus functioning either as a chelating agent for excess SecY in the cell or as a regulatory factor that negatively controls the translocase function. This chain is Protein Syd, found in Yersinia pestis bv. Antiqua (strain Antiqua).